Reading from the N-terminus, the 425-residue chain is Enolase (425 aa).

Residue Gln-163 coordinates (2R)-2-phosphoglycerate. Glu-205 serves as the catalytic Proton donor. Residues Asp-242, Glu-285, and Asp-312 each coordinate Mg(2+). Lys-337, Arg-366, Ser-367, and Lys-388 together coordinate (2R)-2-phosphoglycerate. The Proton acceptor role is filled by Lys-337.

This sequence belongs to the enolase family. It depends on Mg(2+) as a cofactor.

Its subcellular location is the cytoplasm. It is found in the secreted. The protein resides in the cell surface. It catalyses the reaction (2R)-2-phosphoglycerate = phosphoenolpyruvate + H2O. Its pathway is carbohydrate degradation; glycolysis; pyruvate from D-glyceraldehyde 3-phosphate: step 4/5. In terms of biological role, catalyzes the reversible conversion of 2-phosphoglycerate (2-PG) into phosphoenolpyruvate (PEP). It is essential for the degradation of carbohydrates via glycolysis. In Granulibacter bethesdensis (strain ATCC BAA-1260 / CGDNIH1), this protein is Enolase.